We begin with the raw amino-acid sequence, 100 residues long: NADH-quinone oxidoreductase subunit K (100 aa).

3 helical membrane-spanning segments follow: residues M1 to G21, I28 to A48, and F64 to F84.

This sequence belongs to the complex I subunit 4L family. In terms of assembly, NDH-1 is composed of 14 different subunits. Subunits NuoA, H, J, K, L, M, N constitute the membrane sector of the complex.

Its subcellular location is the cell inner membrane. It catalyses the reaction a quinone + NADH + 5 H(+)(in) = a quinol + NAD(+) + 4 H(+)(out). In terms of biological role, NDH-1 shuttles electrons from NADH, via FMN and iron-sulfur (Fe-S) centers, to quinones in the respiratory chain. The immediate electron acceptor for the enzyme in this species is believed to be ubiquinone. Couples the redox reaction to proton translocation (for every two electrons transferred, four hydrogen ions are translocated across the cytoplasmic membrane), and thus conserves the redox energy in a proton gradient. The polypeptide is NADH-quinone oxidoreductase subunit K (Helicobacter pylori (strain G27)).